Reading from the N-terminus, the 221-residue chain is Eukaryotic translation initiation factor 3 subunit K (221 aa).

Residues 46–207 (YDLEANLACL…NIKTKHITEK (162 aa)) form the PCI domain.

The protein belongs to the eIF-3 subunit K family. In terms of assembly, component of the eukaryotic translation initiation factor 3 (eIF-3) complex.

Its subcellular location is the cytoplasm. Its function is as follows. Component of the eukaryotic translation initiation factor 3 (eIF-3) complex, which is involved in protein synthesis of a specialized repertoire of mRNAs and, together with other initiation factors, stimulates binding of mRNA and methionyl-tRNAi to the 40S ribosome. The eIF-3 complex specifically targets and initiates translation of a subset of mRNAs involved in cell proliferation. The sequence is that of Eukaryotic translation initiation factor 3 subunit K from Aedes aegypti (Yellowfever mosquito).